The following is a 329-amino-acid chain: Oligopeptide transport ATP-binding protein AppF (329 aa).

The ABC transporter domain maps to L10–L261. ATP is bound at residue G53 to S60.

The protein belongs to the ABC transporter superfamily.

It is found in the cell membrane. Its function is as follows. This protein is a component of an oligopeptide permease, a binding protein-dependent transport system. This APP system can completely substitute for the OPP system in both sporulation and genetic competence, though, unlike OPP, is incapable of transporting tripeptides. Probably responsible for energy coupling to the transport system. This is Oligopeptide transport ATP-binding protein AppF (appF) from Bacillus subtilis (strain 168).